The sequence spans 197 residues: MYB-like transcription factor EOBII (197 aa).

2 HTH myb-type domains span residues 10–62 and 63–117; these read DAEV…LNYL and RPDV…QKHI. DNA-binding regions (H-T-H motif) lie at residues 38 to 62 and 90 to 113; these read WNSLAKSAGLKRTGKSCRLRWLNYL and WSKIAKHLPGRTDNEIKNYWRTRI. The interval 125–158 is disordered; it reads GQAASSEQNDHQEACTSQMSNGPNDNTIDQTYSP. Residues 138 to 158 show a composition bias toward polar residues; the sequence is ACTSQMSNGPNDNTIDQTYSP.

In terms of tissue distribution, specifically expressed in flowers, mostly in stigmas, petal tubes and petal limbs, and, to a lower extent, in anthers and stamen. Also present at low levels in roots, stems, leaves and sepals.

The protein localises to the nucleus. In terms of biological role, MYB-type transcription factor controlling the production of volatile organic compounds (VOCs), including floral volatile benzenoids and phenylpropanoids (FVBP), in flowers of fragrant cultivars (e.g. cv. Mitchell and cv. V26) by regulating the expression of ODO1 and EOBI, key regulators of the shikimate pathway, and of several biosynthetic floral scent-related genes including IGS, PAL2 and CFAT. This scent, mostly produced in the evening and night by the petals, attracts the pollinators (e.g. the night-active hawkmoth pollinator Manduca sexta). Binds to and activates the ODO1 and EOBI promoters via MYB binding sites (MBS) 5'-AAACCTAAT-3' and 5'-CTAACT-3'. Regulates the promoters of IGS1, CFAT and PAL2. Controls flowers petal opening by modulating a global transcriptomic switch. This chain is MYB-like transcription factor EOBII, found in Petunia hybrida (Petunia).